The primary structure comprises 149 residues: Heat shock protein beta-3 (149 aa).

A sHSP domain is found at 47-149 (KARAAQAPPV…VEVKDSAGTK (103 aa)).

Belongs to the small heat shock protein (HSP20) family.

The protein resides in the cytoplasm. It is found in the nucleus. Its function is as follows. Inhibitor of actin polymerization. The chain is Heat shock protein beta-3 (HSPB3) from Bos taurus (Bovine).